A 142-amino-acid polypeptide reads, in one-letter code: Large ribosomal subunit protein uL13 (142 aa).

This sequence belongs to the universal ribosomal protein uL13 family. Part of the 50S ribosomal subunit.

Functionally, this protein is one of the early assembly proteins of the 50S ribosomal subunit, although it is not seen to bind rRNA by itself. It is important during the early stages of 50S assembly. This Syntrophus aciditrophicus (strain SB) protein is Large ribosomal subunit protein uL13.